Consider the following 495-residue polypeptide: MTTATPVKTEYEAIIGLETHCQLNTTSKIFCNCSTEFDSPPNTNVCPICLGYPGVLPVLNEEVLASAVKLGLALNAKIAPYSKFDRKQYFYPDLPKNYQISQFDLPIVEHGSLEIELVDKKSKEVTRKTIGITRLHMEEDAGKLVHAGSDRLAGSTHSLVDFNRTGVPLLEIVSEPDIRSGQEAAEYAQELRRLVRYLGISDGNMQEGSLRCDVNISVRPVGQKEFGTKVEIKNMNSFSAIQKAIEYEIERQIEAVENGDPIYQETRLWDESNQETISMRKKEGSSDYRYFPEPDLPPLEVSEEKLNAWKQELPELPAQKRKRYEEALGLSAYDARVLTDDREVAEYYETAVNTGADAKLVANWVTQDIAAYLNNSKLSIIEIALKPDSLGELVQLIEKGTISGKIAKEILPELLEKGGSPKKIVESKGMTQISDPAEIEKVIEALMEANPSEVEKYRGGKKKLKGFFVGQVMKETGGRADPKLTNQLAEKLLNG.

The protein belongs to the GatB/GatE family. GatB subfamily. In terms of assembly, heterotrimer of A, B and C subunits.

It carries out the reaction L-glutamyl-tRNA(Gln) + L-glutamine + ATP + H2O = L-glutaminyl-tRNA(Gln) + L-glutamate + ADP + phosphate + H(+). The enzyme catalyses L-aspartyl-tRNA(Asn) + L-glutamine + ATP + H2O = L-asparaginyl-tRNA(Asn) + L-glutamate + ADP + phosphate + 2 H(+). Its function is as follows. Allows the formation of correctly charged Asn-tRNA(Asn) or Gln-tRNA(Gln) through the transamidation of misacylated Asp-tRNA(Asn) or Glu-tRNA(Gln) in organisms which lack either or both of asparaginyl-tRNA or glutaminyl-tRNA synthetases. The reaction takes place in the presence of glutamine and ATP through an activated phospho-Asp-tRNA(Asn) or phospho-Glu-tRNA(Gln). The sequence is that of Aspartyl/glutamyl-tRNA(Asn/Gln) amidotransferase subunit B from Crocosphaera subtropica (strain ATCC 51142 / BH68) (Cyanothece sp. (strain ATCC 51142)).